We begin with the raw amino-acid sequence, 685 residues long: Invasion protein InvA (685 aa).

8 helical membrane-spanning segments follow: residues 17–37, 39–59, 61–81, 110–130, 197–217, 235–255, 274–294, and 295–315; these read ILVL…TYLV, FLIA…FYID, ILSF…RLAL, SLAV…IVIT, AIAG…VGMT, IGDG…AGFI, LLNN…MGTL, and PGFP…LFYF.

The protein belongs to the FHIPEP (flagella/HR/invasion proteins export pore) family.

Its subcellular location is the cell inner membrane. Involved in the invasion of the cells of the intestinal epithelium. Could be involved in the translocation of the InvE protein. This is Invasion protein InvA (invA) from Salmonella typhi.